Consider the following 62-residue polypeptide: Protein DsrB (62 aa).

The protein belongs to the DsrB family.

The polypeptide is Protein DsrB (Shigella boydii serotype 18 (strain CDC 3083-94 / BS512)).